Reading from the N-terminus, the 367-residue chain is Cycloaraneosene synthase sdnA (367 aa).

The N-terminal stretch at M1 to A24 is a signal peptide. Mg(2+) contacts are provided by D115, N260, and S264. The DDXXD motif motif lies at D115 to D119. N276 is a glycosylation site (N-linked (GlcNAc...) asparagine).

Belongs to the terpene synthase family. The cofactor is Mg(2+).

It carries out the reaction (2E,6E,10E)-geranylgeranyl diphosphate = cycloaraneosene + diphosphate. It participates in antibiotic biosynthesis. Cycloaraneosene synthase; part of the gene cluster that mediates the biosynthesis of sordarin and hypoxysordarin, glycoside antibiotics with a unique tetracyclic diterpene aglycone structure. First, the geranylgeranyl diphosphate synthase sdnC constructs GGDP from farnesyl diphosphate and isopentenyl diphosphate. The diterpene cyclase sdnA then catalyzes the cyclization of GGDP to afford cycloaraneosene. Cycloaraneosene is then hydroxylated four times by the putative cytochrome P450 monooxygenases sdnB, sdnE, sdnF and sdnH to give a hydroxylated cycloaraneosene derivative such as cycloaraneosene-8,9,13,19-tetraol. Although the order of the hydroxylations is unclear, at least C8, C9 and C13 of the cycloaraneosene skeleton are hydroxylated before the sordaricin formation. Dehydration of the 13-hydroxy group of the hydroxylated cycloaraneosene derivative might be catalyzed by an unassigned hypothetical protein such as sdnG and sdnP to construct the cyclopentadiene moiety. The FAD-dependent oxidoreductase sdnN is proposed to catalyze the oxidation at C9 of the hydroxylated cycloaraneosene derivative and also catalyze the Baeyer-Villiger oxidation to give the lactone intermediate. The presumed lactone intermediate would be hydrolyzed to give an acrolein moiety and a carboxylate moiety. Then, [4+2]cycloaddition would occur between the acrolein moiety and the cyclopentadiene moiety to give sordaricin. SdnN might also be involved in the [4+2]cycloaddition after the hypothesized oxidation to accommodate the oxidized product and prompt the [4+2]cycloaddition. GDP-6-deoxy-D-altrose may be biosynthesized from GDP-D-mannose by the putative GDP-mannose-4,6-dehydratase sdnI and the short-chain dehydrogenase sdnK. The glycosyltransferase sdnJ catalyzes the attachment of 6-deoxy-D-altrose onto the 19-hydroxy group of sordaricin to give 4'-O-demethylsordarin. The methyltransferase sdnD would complete the biosynthesis of sordarin. Sordarin can be further modified into hypoxysordarin. The unique acyl chain at the 3'-hydroxy group of hypoxysordarin would be constructed by an iterative type I PKS sdnO and the trans-acting polyketide methyltransferase sdnL. SdnL would be responsible for the introduction of an alpha-methyl group of the polyketide chain. Alternatively, the beta-lactamase-like protein sdnR might be responsible for the cleavage and transfer of the polyketide chain from the PKS sdnO to sordarin. Two putative cytochrome P450 monooxygenases, sdnQ and sdnT, might catalyze the epoxidations of the polyketide chain to complete the biosynthesis of hypoxysordarin. Transcriptional regulators sdnM and sdnS are presumably encoded for the transcriptional regulation of the expression of the sdn gene cluster. This Sordaria araneosa (Pleurage araneosa) protein is Cycloaraneosene synthase sdnA.